The following is a 215-amino-acid chain: Pyrrolidone-carboxylate peptidase (215 aa).

Residues glutamate 81, cysteine 144, and histidine 168 contribute to the active site.

Belongs to the peptidase C15 family. Homotetramer.

It is found in the cytoplasm. It catalyses the reaction Release of an N-terminal pyroglutamyl group from a polypeptide, the second amino acid generally not being Pro.. In terms of biological role, removes 5-oxoproline from various penultimate amino acid residues except L-proline. The sequence is that of Pyrrolidone-carboxylate peptidase from Bacillus velezensis (strain DSM 23117 / BGSC 10A6 / LMG 26770 / FZB42) (Bacillus amyloliquefaciens subsp. plantarum).